We begin with the raw amino-acid sequence, 834 residues long: RNA-binding protein 12B-B (834 aa).

The region spanning 154–229 (PYLFLRGLPY…RFIEVMQGSE (76 aa)) is the RRM 1 domain. The segment at 237–277 (GTATEGGDTPRMRSEEHSPSRRINGRHFRKRSHSKSPRARS) is disordered. Residues 244 to 255 (DTPRMRSEEHSP) are compositionally biased toward basic and acidic residues. Residues 259 to 277 (INGRHFRKRSHSKSPRARS) show a composition bias toward basic residues. RRM domains lie at 283 to 359 (FYVH…PVSR) and 401 to 478 (LCIY…LISE). Disordered stretches follow at residues 546-572 (GYFRQSDRCSPEDFRHSPEDYRHPWEE) and 621-643 (HFRRSYQEHIRRPPQEHFRRSRE). A compositionally biased stretch (basic and acidic residues) spans 550 to 572 (QSDRCSPEDFRHSPEDYRHPWEE). Residue Ser701 is modified to Phosphoserine. The 77-residue stretch at 758–834 (IRVMISNLPF…GPRKVKLSLL (77 aa)) folds into the RRM 4 domain.

The polypeptide is RNA-binding protein 12B-B (Rbm12b2) (Mus musculus (Mouse)).